Here is an 877-residue protein sequence, read N- to C-terminus: Leucine--tRNA ligase (877 aa).

Residues 43 to 53 (PYPSGRIHMGH) carry the 'HIGH' region motif. Residues 628–632 (KMSKS) carry the 'KMSKS' region motif. Lysine 631 contacts ATP.

Belongs to the class-I aminoacyl-tRNA synthetase family.

The protein localises to the cytoplasm. It carries out the reaction tRNA(Leu) + L-leucine + ATP = L-leucyl-tRNA(Leu) + AMP + diphosphate. The chain is Leucine--tRNA ligase from Brucella anthropi (strain ATCC 49188 / DSM 6882 / CCUG 24695 / JCM 21032 / LMG 3331 / NBRC 15819 / NCTC 12168 / Alc 37) (Ochrobactrum anthropi).